The following is a 709-amino-acid chain: Anillin-like protein 3 (709 aa).

The region spanning 584-705 (DMEYRGFLHI…WLSAINDTLD (122 aa)) is the PH domain.

The chain is Anillin-like protein 3 (ani-3) from Caenorhabditis elegans.